We begin with the raw amino-acid sequence, 934 residues long: Serine/threonine-protein kinase PknD (934 aa).

Positions 4–296 (YELIRLIGKG…ELRQALQPYL (293 aa)) constitute a Protein kinase domain. ATP-binding positions include 10 to 18 (IGKGGMGEV) and lysine 33. Aspartate 138 acts as the Proton acceptor in catalysis.

This sequence belongs to the protein kinase superfamily. Ser/Thr protein kinase family. Interacts with Pkn1. In terms of processing, autophosphorylated on serine and threonine residues. Present in elementary bodies 40 hours post-infection as 2 bands of approximately 55 to 60 and 45 to 50 kDa, which may be due to differential phosphorylation as well as degradation; an enzymatically active full-length protein can also be detected.

It catalyses the reaction L-seryl-[protein] + ATP = O-phospho-L-seryl-[protein] + ADP + H(+). The enzyme catalyses L-threonyl-[protein] + ATP = O-phospho-L-threonyl-[protein] + ADP + H(+). Its function is as follows. Together with the serine/threonine kinase Pkn1, may play a role in the specific interactions with host proteins during intracellular growth. Autophosphorylates and also phosphorylates Pkn1. The sequence is that of Serine/threonine-protein kinase PknD from Chlamydia trachomatis serovar L2 (strain ATCC VR-902B / DSM 19102 / 434/Bu).